A 472-amino-acid chain; its full sequence is NADH-quinone oxidoreductase subunit N (472 aa).

A run of 14 helical transmembrane segments spans residues Leu5–Leu25, Ala36–Ile56, Ile77–Pro97, Phe103–Leu123, Leu126–Gly146, Leu158–Leu178, Leu197–Phe217, Pro229–Val249, Trp264–Ile284, Met292–Met309, Ile319–Ala339, Ala363–Val383, Gly396–Leu416, and Leu441–Ala461.

The protein belongs to the complex I subunit 2 family. As to quaternary structure, NDH-1 is composed of 14 different subunits. Subunits NuoA, H, J, K, L, M, N constitute the membrane sector of the complex.

The protein localises to the cell membrane. It catalyses the reaction a quinone + NADH + 5 H(+)(in) = a quinol + NAD(+) + 4 H(+)(out). In terms of biological role, NDH-1 shuttles electrons from NADH, via FMN and iron-sulfur (Fe-S) centers, to quinones in the respiratory chain. The immediate electron acceptor for the enzyme in this species is believed to be a menaquinone. Couples the redox reaction to proton translocation (for every two electrons transferred, four hydrogen ions are translocated across the cytoplasmic membrane), and thus conserves the redox energy in a proton gradient. In Heliobacterium modesticaldum (strain ATCC 51547 / Ice1), this protein is NADH-quinone oxidoreductase subunit N.